We begin with the raw amino-acid sequence, 61 residues long: Fasciculin-2 (61 aa).

Cystine bridges form between C3–C22, C17–C39, C41–C52, and C53–C59.

The protein belongs to the three-finger toxin family. Short-chain subfamily. Acn-esterase inhibitor sub-subfamily. In terms of tissue distribution, expressed by the venom gland.

The protein localises to the secreted. Functionally, interferes with neuromuscular transmission by inhibiting the enzyme acetylcholinesterase (AChE) present at the neuromuscular junction. It selectively binds and inhibits with a 1:1 stoichiometry the mammalian and electric fish AChE at picomolar concentrations. It is highly specific for the peripheral site of AChE and blocks the entry of acetylcholine into the active site of the enzyme (through the Met-33 residue), thereby preventing its breakdown. It has been called fasciculin since after injection into mice it causes severe, generalized and long-lasting (5-7 hours) fasciculations. This chain is Fasciculin-2, found in Dendroaspis angusticeps (Eastern green mamba).